Reading from the N-terminus, the 350-residue chain is Ion-translocating oxidoreductase complex subunit D (350 aa).

Transmembrane regions (helical) follow at residues 36-56 (FYFF…IALL), 68-88 (PIIS…IGVS), 89-109 (IPSI…IVIV), and 120-140 (IFNP…VQMT). An FMN phosphoryl threonine modification is found at threonine 185. The next 5 helical transmembrane spans lie at 212-232 (GFGV…LAML), 239-259 (WQIS…GYLL), 265-285 (IGPL…FIAT), 291-311 (ATSV…VYVI), and 315-335 (GGYP…APFI).

It belongs to the NqrB/RnfD family. As to quaternary structure, the complex is composed of six subunits: RnfA, RnfB, RnfC, RnfD, RnfE and RnfG. Requires FMN as cofactor.

It is found in the cell inner membrane. In terms of biological role, part of a membrane-bound complex that couples electron transfer with translocation of ions across the membrane. This Shewanella piezotolerans (strain WP3 / JCM 13877) protein is Ion-translocating oxidoreductase complex subunit D.